The following is a 308-amino-acid chain: HTH-type transcriptional activator AllS (308 aa).

The 58-residue stretch at 2–59 (FDPETLRTFIAVAETGSFSKAAERLCKTTATISYRIKLLEENTGVALFFRTTRSVTLT) folds into the HTH lysR-type domain. The segment at residues 19–38 (FSKAAERLCKTTATISYRIK) is a DNA-binding region (H-T-H motif).

This sequence belongs to the LysR transcriptional regulatory family.

Its function is as follows. Positive regulator essential for the expression of AllD operon. Binds to the AllD promoter. The sequence is that of HTH-type transcriptional activator AllS (allS) from Escherichia coli O157:H7.